Reading from the N-terminus, the 379-residue chain is Probable pectin lyase B (379 aa).

A signal peptide spans 1–20 (MHYKLLFAAAAASLASAVSA). 2 cysteine pairs are disulfide-bonded: Cys83-Cys102 and Cys92-Cys226. N-linked (GlcNAc...) asparagine glycosylation is found at Asn129 and Asn252. Arg256 is an active-site residue. Cys323 and Cys331 are oxidised to a cystine.

This sequence belongs to the polysaccharide lyase 1 family.

The protein resides in the secreted. The catalysed reaction is Eliminative cleavage of (1-&gt;4)-alpha-D-galacturonan methyl ester to give oligosaccharides with 4-deoxy-6-O-methyl-alpha-D-galact-4-enuronosyl groups at their non-reducing ends.. Functionally, pectinolytic enzymes consist of four classes of enzymes: pectin lyase, polygalacturonase, pectin methylesterase and rhamnogalacturonase. Among pectinolytic enzymes, pectin lyase is the most important in depolymerization of pectin, since it cleaves internal glycosidic bonds of highly methylated pectins. This chain is Probable pectin lyase B (pelB), found in Aspergillus niger (strain ATCC MYA-4892 / CBS 513.88 / FGSC A1513).